Consider the following 325-residue polypeptide: 5-dehydro-2-deoxygluconokinase (325 aa).

It belongs to the carbohydrate kinase PfkB family.

It catalyses the reaction 5-dehydro-2-deoxy-D-gluconate + ATP = 6-phospho-5-dehydro-2-deoxy-D-gluconate + ADP + H(+). It participates in polyol metabolism; myo-inositol degradation into acetyl-CoA; acetyl-CoA from myo-inositol: step 5/7. Its function is as follows. Catalyzes the phosphorylation of 5-dehydro-2-deoxy-D-gluconate (2-deoxy-5-keto-D-gluconate or DKG) to 6-phospho-5-dehydro-2-deoxy-D-gluconate (DKGP). In Bacillus licheniformis (strain ATCC 14580 / DSM 13 / JCM 2505 / CCUG 7422 / NBRC 12200 / NCIMB 9375 / NCTC 10341 / NRRL NRS-1264 / Gibson 46), this protein is 5-dehydro-2-deoxygluconokinase.